A 613-amino-acid polypeptide reads, in one-letter code: Chaperone protein DnaK (613 aa).

The interval 578-613 (MYQSQATQGTSQNSSQNNNSQNNNGDTVDADFKESK) is disordered. A compositionally biased stretch (low complexity) spans 580 to 602 (QSQATQGTSQNSSQNNNSQNNNG).

This sequence belongs to the heat shock protein 70 family.

Functionally, acts as a chaperone. In Picrophilus torridus (strain ATCC 700027 / DSM 9790 / JCM 10055 / NBRC 100828 / KAW 2/3), this protein is Chaperone protein DnaK.